Consider the following 521-residue polypeptide: Sodium/hydrogen exchanger 5 (521 aa).

Residues 1–23 (MEEVMISPVEHDPQGQVKQQQAA) lie on the Cytoplasmic side of the membrane. Residues 24-44 (GVGILLQIMMLVLSFVLGHVL) form a helical membrane-spanning segment. Residues 45–48 (RRHR) lie on the Lumenal side of the membrane. A helical membrane pass occupies residues 49–69 (FHYLPEASGSLLIGLIVGILA). Over 70–86 (NISDTETSIRTWFNFHE) the chain is Cytoplasmic. The segment at residues 87 to 107 (EFFFLFLLPPIIFQSGFSLQP) is an intramembrane region (helical). The Cytoplasmic segment spans residues 108-115 (KPFFSNFG). The helical transmembrane segment at 116–136 (AIVTFAIIGTFVASVVTGGLV) threads the bilayer. Residues 137-141 (YLGGS) lie on the Lumenal side of the membrane. 2 intramembrane regions (helical) span residues 142 to 162 (MYLMYKLPFVECLMFGALISA) and 166 to 186 (VTVLSIFQDVGTDVNLYALVF). Over 187–222 (GESVLNDAMAISLYRTMSLVNRQSSSGEHFFMVVIR) the chain is Lumenal. Residues 223-243 (FFETFAGSMSAGVGVGFTSAL) traverse the membrane as a helical segment. Residues 244-271 (LFKYAGLDTENLQNLECCLFVLFPYFSY) are Cytoplasmic-facing. Residues 272–292 (MLAEGVGLSGIVSILFTGIVM) form a helical membrane-spanning segment. At 293 to 310 (KRYTFSNLSEASQSFVSS) the chain is on the lumenal side. Asn299 carries an N-linked (GlcNAc...) asparagine glycan. A helical transmembrane segment spans residues 311–331 (FFHLISSLAETFTFIYMGFDI). Over 332–340 (AMEQHSWSH) the chain is Cytoplasmic. A helical membrane pass occupies residues 341–361 (VGFILFSILFIGVARAVNVFG). Residues 362-382 (CAYLVNLFRQENQKIPMKHQK) are Lumenal-facing. A helical membrane pass occupies residues 383-402 (ALWYSGLRGAMAFALALQSL). Over 403-411 (HDLPEGHGQ) the chain is Cytoplasmic. A helical membrane pass occupies residues 412–432 (IIFTATTTIVVVTVLLIGGST). Residues 433–521 (GKMLEALEVV…NSGDGDGDGE (89 aa)) are Lumenal-facing. The interval 453-480 (GFEESDHQYVPPPFSIGASSDEDTSSSG) is disordered. Over residues 467–480 (SIGASSDEDTSSSG) the composition is skewed to low complexity.

It belongs to the monovalent cation:proton antiporter 1 (CPA1) transporter (TC 2.A.36) family. As to expression, expressed in roots, leaves, stems, flowers and siliques. Detected at low levels in roots and shoots.

Its subcellular location is the endosome membrane. The protein resides in the golgi apparatus. It localises to the trans-Golgi network membrane. It is found in the golgi stack membrane. It catalyses the reaction Na(+)(in) + H(+)(out) = Na(+)(out) + H(+)(in). The enzyme catalyses K(+)(in) + H(+)(out) = K(+)(out) + H(+)(in). Functionally, involved in trafficking to the vacuole. Required for cell proliferation and cell expansion, but not for cell differentiation. Acts in low affinity electroneutral exchange of protons for cations such as Na(+) or K(+) across membranes. May also exchange Li(+) and Cs(+) with a lower affinity. In Arabidopsis thaliana (Mouse-ear cress), this protein is Sodium/hydrogen exchanger 5 (NHX5).